Reading from the N-terminus, the 136-residue chain is Large ribosomal subunit protein uL16 (136 aa).

Belongs to the universal ribosomal protein uL16 family. Part of the 50S ribosomal subunit.

Binds 23S rRNA and is also seen to make contacts with the A and possibly P site tRNAs. This chain is Large ribosomal subunit protein uL16, found in Bradyrhizobium diazoefficiens (strain JCM 10833 / BCRC 13528 / IAM 13628 / NBRC 14792 / USDA 110).